Consider the following 259-residue polypeptide: Flap endonuclease Xni (259 aa).

Asp109 contacts Mg(2+). The 5'-3' exonuclease domain occupies 165-255; the sequence is VKPQQLSDYW…FNLQDLRFTA (91 aa). Residues Leu176, Ile187, and Ile190 each contribute to the K(+) site. Positions 189–194 are interaction with DNA; it reads GIGPKA.

This sequence belongs to the Xni family. Mg(2+) serves as cofactor. It depends on K(+) as a cofactor.

In terms of biological role, has flap endonuclease activity. During DNA replication, flap endonucleases cleave the 5'-overhanging flap structure that is generated by displacement synthesis when DNA polymerase encounters the 5'-end of a downstream Okazaki fragment. In Vibrio vulnificus (strain YJ016), this protein is Flap endonuclease Xni.